The chain runs to 421 residues: EQQRYLNAKKYVKLFLVADYIMYLKYGRNLTAVRTRMYDIDNVITPIYHRMNIHVALVGLEIWSNTDKIIVQSSADVTLDLFAKWRATDLLSRKSHDNAQLLTGINFNGPTAGLGYLGGICNTMYSAGIVQDHSKIHDLVAIAIAHEMGHNLGMDHDKDTCTCGTRPCIMAGALSCEASFLFSDCSQKDHQEFLIKNMPQCILKKPLKTDVVSPAVCGNYFVEVGEECDCGPPRTCRDPCCDAATCKLRQGAQCAEGLCCDQCRFKGAGTECRAAKDECDMADVCTGRSTECTDRFQRNGQPCKNNNGYCYNGKCPIMADQCIALFGPGATVSQDACFQFNREGNHYGYCRKEQNTKIACEPQDVKCGRLYCFPNSPENKNPCNIYYSPNDEDKGMVLPGTKCADGKACSNGQCVDVNTPY.

Residues 10–206 (KYVKLFLVAD…NMPQCILKKP (197 aa)) form the Peptidase M12B domain. N-linked (GlcNAc...) asparagine glycosylation occurs at N29. 3 disulfides stabilise this stretch: C121-C201, C161-C185, and C163-C168. Residue H146 participates in Zn(2+) binding. E147 is an active-site residue. Positions 150 and 156 each coordinate Zn(2+). Positions 214–299 (PAVCGNYFVE…TECTDRFQRN (86 aa)) constitute a Disintegrin domain. Ca(2+)-binding residues include V216, N219, F221, E223, E226, and D229. Cystine bridges form between C217–C246, C228–C241, C230–C236, C240–C263, C254–C260, C259–C285, C272–C292, C279–C310, C303–C315, C322–C372, C337–C383, C350–C360, C367–C409, and C403–C414. Positions 278–280 (ECD) match the D/ECD-tripeptide motif. Ca(2+) contacts are provided by D280, M281, D283, D294, and R295.

It belongs to the venom metalloproteinase (M12B) family. P-III subfamily. P-IIIc sub-subfamily. As to quaternary structure, homodimer; disulfide-linked. Zn(2+) is required as a cofactor. In terms of tissue distribution, expressed by the venom gland.

The protein localises to the secreted. Functionally, snake venom zinc metalloprotease that induces apoptosis in vascular endothelial cells (VEC), without degrading the extracellular matrix (it cannot cleave collagen) or inhibiting adhesion of VEC. Has also fibrinogenolytic and hemorrhagic activities. The sequence is that of Zinc metalloproteinase-disintegrin-like crotastatin from Crotalus durissus terrificus (South American rattlesnake).